The chain runs to 388 residues: Lysocardiolipin acyltransferase 1 (388 aa).

2 consecutive transmembrane segments (helical) span residues 9–29 (FLLF…GPLL) and 46–66 (IVAT…GVKV). The HXXXXD motif signature appears at 85–90 (HRTRLD). A run of 2 helical transmembrane segments spans residues 321-341 (IILV…CASL) and 342-362 (CLCP…LCQQ).

It belongs to the 1-acyl-sn-glycerol-3-phosphate acyltransferase family.

The protein localises to the endoplasmic reticulum membrane. It catalyses the reaction a 1-acyl-sn-glycero-3-phosphate + an acyl-CoA = a 1,2-diacyl-sn-glycero-3-phosphate + CoA. The enzyme catalyses a 1-acyl-sn-glycero-3-phospho-(1D-myo-inositol) + an acyl-CoA = a 1,2-diacyl-sn-glycero-3-phospho-(1D-myo-inositol) + CoA. The catalysed reaction is 1-acyl-sn-glycero-3-phospho-(1'-sn-glycerol) + an acyl-CoA = a 1,2-diacyl-sn-glycero-3-phospho-(1'-sn-glycerol) + CoA. It carries out the reaction 1-hexadecanoyl-sn-glycero-3-phosphate + (9Z)-octadecenoyl-CoA = 1-hexadecanoyl-2-(9Z-octadecenoyl)-sn-glycero-3-phosphate + CoA. It catalyses the reaction 1-(9Z-octadecenoyl)-sn-glycero-3-phosphate + (9Z)-octadecenoyl-CoA = 1,2-di-(9Z-octadecenoyl)-sn-glycero-3-phosphate + CoA. The enzyme catalyses 1-(9Z,12Z)-octadecadienoyl-sn-glycero-3-phosphate + (9Z)-octadecenoyl-CoA = 1-(9Z,12Z)-octadecadienoyl-2-(9Z)-octadecenoyl-sn-glycero-3-phosphate + CoA. The catalysed reaction is 1-(9Z,12Z,15Z)-octadecatrienoyl-sn-glycero-3-phosphate + (9Z)-octadecenoyl-CoA = 1-(9Z,12Z,15Z)-octadecatrienoyl-2-(9Z)-octadecenoyl-sn-glycero-3-phosphate + CoA. It carries out the reaction 1-(9Z-octadecenoyl)-sn-glycero-3-phosphate + hexadecanoyl-CoA = 1-(9Z)-octadecenoyl-2-hexadecanoyl-sn-glycero-3-phosphate + CoA. It catalyses the reaction 1-(9Z-octadecenoyl)-sn-glycero-3-phosphate + octadecanoyl-CoA = 1-(9Z-octadecenoyl)-2-octadecanoyl-sn-glycero-3-phosphate + CoA. The enzyme catalyses 1-acyl-sn-glycero-3-phospho-(1'-sn-glycerol) + (9Z)-octadecenoyl-CoA = 1-acyl-2-(9Z-octadecenoyl)-sn-glycero-3-phospho-(1'-sn-glycerol) + CoA. The catalysed reaction is a 1-acyl-sn-glycero-3-phospho-(1D-myo-inositol) + (9Z)-octadecenoyl-CoA = a 1-acyl-2-(9Z-octadecenoyl)-sn-glycero-3-phospho-(1D-myo-inositol) + CoA. It carries out the reaction 1-hexadecanoyl-sn-glycero-3-phospho-(1D-myo-inositol) + hexadecanoyl-CoA = 1,2-dihexadecanoyl-sn-glycero-3-phospho-(1D-myo-inositol) + CoA. It catalyses the reaction 1-hexadecanoyl-sn-glycero-3-phospho-(1D-myo-inositol) + octadecanoyl-CoA = 1-hexadecanoyl-2-octadecanoyl-sn-glycero-3-phospho-(1D-myo-inositol) + CoA. The enzyme catalyses 1-hexadecanoyl-sn-glycero-3-phospho-(1D-myo-inositol) + (9Z)-octadecenoyl-CoA = 1-hexadecanoyl-2-(9Z-octadecenoyl)-sn-glycero-3-phospho-(1D-myo-inositol) + CoA. The catalysed reaction is 1-hexadecanoyl-sn-glycero-3-phospho-(1D-myo-inositol) + (9Z,12Z)-octadecadienoyl-CoA = 1-hexadecanoyl-2-(9Z,12Z-octadecadienoyl)-sn-glycero-3-phospho-(1D-myo-inositol) + CoA. It carries out the reaction 1-hexadecanoyl-sn-glycero-3-phospho-(1D-myo-inositol) + (5Z,8Z,11Z,14Z)-eicosatetraenoyl-CoA = 1-hexadecanoyl-2-(5Z,8Z,11Z,14Z-eicosatetraenoyl)-sn-glycero-3-phospho-D-myo-inositol + CoA. It catalyses the reaction 1-hexadecanoyl-sn-glycero-3-phospho-(1'-sn-glycerol) + hexadecanoyl-CoA = 1,2-dihexadecanoyl-sn-glycero-3-phospho-(1'-sn-glycerol) + CoA. The enzyme catalyses 1-hexadecanoyl-sn-glycero-3-phospho-(1'-sn-glycerol) + octadecanoyl-CoA = 1-hexadecanoyl-2-octadecanoyl-sn-glycero-3-phospho-(1'-sn-glycerol) + CoA. The catalysed reaction is 1-hexadecanoyl-sn-glycero-3-phospho-(1'-sn-glycerol) + (9Z)-octadecenoyl-CoA = 1-hexadecanoyl-2-(9Z-octadecenoyl)-sn-glycero-3-phospho-(1'-sn-glycerol) + CoA. It carries out the reaction 1-hexadecanoyl-sn-glycero-3-phospho-(1'-sn-glycerol) + (9Z,12Z)-octadecadienoyl-CoA = 1-hexadecanoyl-2-(9Z,12Z-octadecadienoyl)-sn-glycero-3-phospho-(1'-sn-glycerol) + CoA. It catalyses the reaction 1-tetradecanoyl-sn-glycero-3-phospho-(1'-sn-glycerol) + (9Z)-octadecenoyl-CoA = 1-tetradecanoyl-2-(9Z-octadecenoyl)-sn-glycero-3-phospho-(1'-sn-glycerol) + CoA. The enzyme catalyses 1-octadecanoyl-sn-glycero-3-phospho-(1'-sn-glycerol) + (9Z)-octadecenoyl-CoA = 1-octadecanoyl-2-(9Z-octadecenoyl)-sn-glycero-3-phospho-(1'-sn-glycerol) + CoA. The catalysed reaction is 1-(9Z-octadecenoyl)-sn-glycero-3-phospho-(1'-sn-glycerol) + (9Z)-octadecenoyl-CoA = 1,2-di-(9Z-octadecenoyl)-sn-glycero-3-phospho-(1'-sn-glycerol) + CoA. It carries out the reaction 1-hexadecanoyl-sn-glycero-3-phospho-(1D-myo-inositol) + dodecanoyl-CoA = 1-hexadecanoyl-2-dodecanoyl-sn-glycero-3-phospho-(1D-myo-inositol) + CoA. It catalyses the reaction 1',3'-bis-[1-acyl-sn-glycero-3-phospho]-glycerol + (9Z)-octadecenoyl-CoA = 1'-[1-acyl-2-(9Z)-octadecenoyl-sn-glycero-3-phospho],3'-[1-acyl,2-hydroxy-sn-glycero-3-phospho]-glycerol + CoA. The enzyme catalyses 1'-[1,2-diacyl-sn-glycero-3-phospho],3'-[1-acyl-sn-glycero-3-phospho]-glycerol + (9Z)-octadecenoyl-CoA = 1'-[1,2-diacyl-sn-glycero-3-phospho],3'-[1-acyl,2-(9Z)-octadecenoyl-sn-glycero-3-phospho]-glycerol + CoA. The catalysed reaction is 1'-[1,2-diacyl-sn-glycero-3-phospho],3'-[1-acyl-sn-glycero-3-phospho]-glycerol + (9Z,12Z)-octadecadienoyl-CoA = 1'-[1,2-diacyl-sn-glycero-3-phospho],3'-[1-acyl,2-(9Z,12Z)-octadecadienoyl-sn-glycero-3-phospho]-glycerol + CoA. It carries out the reaction 1'-[1,2-diacyl-sn-glycero-3-phospho],3'-[1-acyl-sn-glycero-3-phospho]-glycerol + dodecanoyl-CoA = 1'-[1,2-diacyl-sn-glycero-3-phospho],3'-[1-acyl,2-dodecanoyl-sn-glycero-3-phospho]-glycerol + CoA. It catalyses the reaction 1',3'-bis-[1-acyl-sn-glycero-3-phospho]-glycerol + dodecanoyl-CoA = 1'-[1-acyl-2-dodecanoyl-sn-glycero-3-phospho],3'-[1-acyl,2-hydroxy-sn-glycero-3-phospho]-glycerol + CoA. The enzyme catalyses a 1-acyl-sn-glycero-3-phosphate + (9Z)-octadecenoyl-CoA = a 1-acyl-2-(9Z-octadecenoyl)-sn-glycero-3-phosphate + CoA. The catalysed reaction is 1',3'-bis-[1-acyl-sn-glycero-3-phospho]-glycerol + (9Z,12Z)-octadecadienoyl-CoA = 1'-[1-acyl-2-(9Z,12Z)-octadecadienoyl-sn-glycero-3-phospho],3'-[1-acyl,2-hydroxy-sn-glycero-3-phospho]-glycerol + CoA. It carries out the reaction 1',3'-bis-[1-acyl-sn-glycero-3-phospho]-glycerol + hexadecanoyl-CoA = 1'-[1-acyl-2-hexadecanoyl-sn-glycero-3-phospho],3'-[1-acyl,2-hydroxy-sn-glycero-3-phospho]-glycerol + CoA. It catalyses the reaction 1',3'-bis-[1-acyl-sn-glycero-3-phospho]-glycerol + octadecanoyl-CoA = 1'-[1-acyl-2-octadecanoyl-sn-glycero-3-phospho],3'-[1-acyl,2-hydroxy-sn-glycero-3-phospho]-glycerol + CoA. The enzyme catalyses 1'-[1,2-diacyl-sn-glycero-3-phospho],3'-[1-acyl-sn-glycero-3-phospho]-glycerol + octanoyl-CoA = 1'-[1,2-diacyl-sn-glycero-3-phospho],3'-[1-acyl,2-octanoyl-sn-glycero-3-phospho]-glycerol + CoA. The catalysed reaction is 1',3'-bis-[1-acyl-sn-glycero-3-phospho]-glycerol + octanoyl-CoA = 1'-[1-acyl-2-octanoyl-sn-glycero-3-phospho],3'-[1-acyl,2-hydroxy-sn-glycero-3-phospho]-glycerol + CoA. It carries out the reaction 1'-[1,2-diacyl-sn-glycero-3-phospho],3'-[1-acyl-sn-glycero-3-phospho]-glycerol + hexadecanoyl-CoA = 1'-[1,2-diacyl-sn-glycero-3-phospho],3'-[1-acyl,2-hexadecanoyl-sn-glycero-3-phospho]-glycerol + CoA. It catalyses the reaction 1'-[1,2-diacyl-sn-glycero-3-phospho],3'-[1-acyl-sn-glycero-3-phospho]-glycerol + (5Z,8Z,11Z,14Z)-eicosatetraenoyl-CoA = 1'-[1,2-diacyl-sn-glycero-3-phospho],3'-[1-acyl,2-(5Z,8Z,11Z,14Z)-eicosatetraenoyl-sn-glycero-3-phospho]-glycerol + CoA. The enzyme catalyses 1',3'-bis-[1-acyl-sn-glycero-3-phospho]-glycerol + (5Z,8Z,11Z,14Z)-eicosatetraenoyl-CoA = 1'-[1-acyl-2-(5Z,8Z,11Z,14Z)-eicosatetraenoyl-sn-glycero-3-phospho],3'-[1-acyl,2-hydroxy-sn-glycero-3-phospho]-glycerol + CoA. The catalysed reaction is a 1-acyl-sn-glycero-3-phospho-(1D-myo-inositol) + octadecanoyl-CoA = a 1-acyl-2-octadecanoyl-sn-glycero-3-phospho-(1D-myo-inositol) + CoA. It carries out the reaction a 2-acyl-sn-glycero-3-phospho-D-myo-inositol + octadecanoyl-CoA = 1-octadecanoyl-2-acyl-sn-glycero-3-phospho-1D-myo-inositol + CoA. Its pathway is phospholipid metabolism; CDP-diacylglycerol biosynthesis; CDP-diacylglycerol from sn-glycerol 3-phosphate: step 2/3. Its function is as follows. Exhibits acyl-CoA:lysocardiolipin acyltransferase (ALCAT) activity; catalyzes the reacylation of lyso-cardiolipin to cardiolipin (CL), a key step in CL remodeling. Recognizes both monolysocardiolipin and dilysocardiolipin as substrates with a preference for linoleoyl-CoA and oleoyl-CoA as acyl donors. Also exhibits 1-acyl-sn-glycerol-3-phosphate acyltransferase activity (AGPAT) activity; converts 1-acyl-sn-glycerol-3- phosphate (lysophosphatidic acid or LPA) into 1,2-diacyl-sn-glycerol-3- phosphate (phosphatidic acid or PA) by incorporating an acyl moiety at the sn-2 position of the glycerol backbone. Possesses both lysophosphatidylinositol acyltransferase (LPIAT) and lysophosphatidylglycerol acyltransferase (LPGAT) activities. Required for establishment of the hematopoietic and endothelial lineages. This Danio rerio (Zebrafish) protein is Lysocardiolipin acyltransferase 1 (lclat1).